Reading from the N-terminus, the 688-residue chain is Complement C1s subcomponent (688 aa).

Positions 1–15 (MWCFVFFSLLASFSA) are cleaved as a signal peptide. One can recognise a CUB 1 domain in the interval 16-130 (EPTMYGEILS…TGFAAYYSAV (115 aa)). Ca(2+) contacts are provided by Glu60, Asp68, Asp113, Asp131, Val132, and Glu134. The cysteines at positions 65 and 83 are disulfide-linked. An EGF-like; calcium-binding domain is found at 131-172 (DVNECTDFTDVPCSHFCNNFIGGYFCSCPPEYFLHDDMRTCG). 3 disulfide bridges follow: Cys135/Cys147, Cys143/Cys156, and Cys158/Cys171. 3 residues coordinate Ca(2+): Asn149, Phe150, and Gly153. Asn149 carries the (3R)-3-hydroxyasparagine modification. A glycan (N-linked (GlcNAc...) asparagine) is linked at Asn174. Cys175 and Cys202 are oxidised to a cystine. The CUB 2 domain occupies 175 to 290 (CSGDVFTALI…KGWKLRYHGD (116 aa)). Residues Glu226, Asp236, Asp275, Gly278, and Gln279 each contribute to the Ca(2+) site. A disulfide bridge connects residues Cys234 and Cys251. 2 Sushi domains span residues 292 to 356 (IPCP…ECQP) and 357 to 423 (VDCG…KCIP). 7 cysteine pairs are disulfide-bonded: Cys294-Cys341, Cys321-Cys354, Cys359-Cys403, Cys386-Cys421, Cys425-Cys549, Cys595-Cys618, and Cys627-Cys659. A glycan (N-linked (GlcNAc...) asparagine) is linked at Asn406. In terms of domain architecture, Peptidase S1 spans 438–680 (IFGGYSTKIQ…YVDWILKTMQ (243 aa)). Residues His475 and Asp529 each act as charge relay system in the active site. Ser631 functions as the Charge relay system in the catalytic mechanism.

Belongs to the peptidase S1 family. In terms of assembly, core component of the complement C1 complex, a calcium-dependent complex composed of 1 molecule of the C1Q subcomplex, 2 molecules of C1R and 2 molecules of C1S. The C1Q subcomplex is composed 18 subunits: 3 chains of C1QA, C1QB, and C1QC trimerize to form 6 collagen-like triple helices connected to six globular ligand-recognition modules. Cleaved and activated by C1R to generate Complement C1s subcomponent heavy and light chains. Post-translationally, the iron and 2-oxoglutarate dependent 3-hydroxylation of aspartate and asparagine is (R) stereospecific within EGF domains.

Its subcellular location is the secreted. It is found in the cell surface. The enzyme catalyses Cleavage of Arg-|-Ala bond in complement component C4 to form C4a and C4b, and Lys(or Arg)-|-Lys bond in complement component C2 to form C2a and C2b: the 'classical' pathway C3 convertase.. With respect to regulation, cleaved and activated by C1R. Immunoglobulin-binding promotes autoactivation of C1R, which results in the cleavage of the Arg-Ile bond in the catalytic domain. Inhibited by C1 inhibitor (SERPING1). In terms of biological role, component of the complement C1 complex, a multiprotein complex that initiates the classical pathway of the complement system, a cascade of proteins that leads to phagocytosis and breakdown of pathogens and signaling that strengthens the adaptive immune system. C1S is activated following association of the C1 complex with immunoglobulins (IgG or IgM) complexed with antigens to form antigen-antibody complexes on the surface of pathogens. C1S is cleaved and activated by C1R to generate C1s subcomponent heavy and light chains. C1s subcomponent light chain then cleaves and activates C2 and C4, the next components of the classical complement pathway. Functionally, serine protease component of the complement C1 complex, which catalyzes cleavage and activation of C2 and C4, the next components of the classical complement pathway. Also cleaves IGFBP5 and thereby inhibits the trophic effects of IGF1. In Rattus norvegicus (Rat), this protein is Complement C1s subcomponent.